We begin with the raw amino-acid sequence, 468 residues long: Cyclin-dependent kinase 14 (468 aa).

S24, S77, and S94 each carry phosphoserine. The disordered stretch occupies residues 103-132 (KTSSAGKESPKVRRHSSPSSPTSPKFGKAD). S133 carries the phosphoserine modification. In terms of domain architecture, Protein kinase spans 134–418 (YEKLEKLGEG…AQAALSHEYF (285 aa)). ATP is bound by residues 140-148 (LGEGSYATV) and K163. D255 acts as the Proton acceptor in catalysis. A disordered region spans residues 448 to 468 (ESMRAFGKNNSYGKSLSNSKH). Residues 455–468 (KNNSYGKSLSNSKH) show a composition bias toward polar residues.

The protein belongs to the protein kinase superfamily. CMGC Ser/Thr protein kinase family. CDC2/CDKX subfamily. As to quaternary structure, found in a complex with LRP6, CCNY and CAPRIN2 during G2/M stage; CAPRIN2 functions as a scaffold for the complex by binding to CCNY via its N terminus and to CDK14 via its C terminus. Interacts with CCNY; CCNY mediates its recruitment to the plasma membrane and promotes phosphorylation of LRP6. Interacts with CCDN3 and CDKN1A. Interacts with SEPT8. Interacts with 14-3-3 proteina YWHAB, YWHAE, YWHAH and YWHAQ.

It localises to the cell membrane. The protein resides in the cytoplasm. Its subcellular location is the nucleus. The enzyme catalyses L-seryl-[protein] + ATP = O-phospho-L-seryl-[protein] + ADP + H(+). The catalysed reaction is L-threonyl-[protein] + ATP = O-phospho-L-threonyl-[protein] + ADP + H(+). Its activity is regulated as follows. Serine/threonine-protein kinase activity is promoted by associated cyclins CCDN3 and CCNY and repressed by CDKN1A. Functionally, serine/threonine-protein kinase involved in the control of the eukaryotic cell cycle, whose activity is controlled by an associated cyclin. Acts as a cell-cycle regulator of Wnt signaling pathway during G2/M phase by mediating the phosphorylation of LRP6 at 'Ser-1490', leading to the activation of the Wnt signaling pathway. Acts as a regulator of cell cycle progression and cell proliferation via its interaction with CCDN3. Phosphorylates RB1 in vitro, however the relevance of such result remains to be confirmed in vivo. May also play a role in meiosis, neuron differentiation and may indirectly act as a negative regulator of insulin-responsive glucose transport. The polypeptide is Cyclin-dependent kinase 14 (CDK14) (Dasypus novemcinctus (Nine-banded armadillo)).